The chain runs to 151 residues: Ribosome maturation factor RimP (151 aa).

This sequence belongs to the RimP family.

The protein resides in the cytoplasm. Functionally, required for maturation of 30S ribosomal subunits. This Shewanella sediminis (strain HAW-EB3) protein is Ribosome maturation factor RimP.